Here is a 293-residue protein sequence, read N- to C-terminus: Bifunctional protein FolD (293 aa).

NADP(+) is bound by residues 165-167 (GRS), threonine 194, and valine 235.

This sequence belongs to the tetrahydrofolate dehydrogenase/cyclohydrolase family. Homodimer.

The catalysed reaction is (6R)-5,10-methylene-5,6,7,8-tetrahydrofolate + NADP(+) = (6R)-5,10-methenyltetrahydrofolate + NADPH. It catalyses the reaction (6R)-5,10-methenyltetrahydrofolate + H2O = (6R)-10-formyltetrahydrofolate + H(+). It participates in one-carbon metabolism; tetrahydrofolate interconversion. Catalyzes the oxidation of 5,10-methylenetetrahydrofolate to 5,10-methenyltetrahydrofolate and then the hydrolysis of 5,10-methenyltetrahydrofolate to 10-formyltetrahydrofolate. The protein is Bifunctional protein FolD of Syntrophus aciditrophicus (strain SB).